The sequence spans 311 residues: Interleukin-20 receptor subunit beta (311 aa).

The first 29 residues, 1 to 29, serve as a signal peptide directing secretion; it reads MQTFTMVLEEIWTSLFMWFFYALIPCLLT. Topologically, residues 30-233 are extracellular; that stretch reads DEVAILPAPQ…VEVQGEAIPL (204 aa). Fibronectin type-III domains are found at residues 37-136 and 144-228; these read APQN…RNST and EITK…EVQG. Asparagine 40 carries an N-linked (GlcNAc...) asparagine glycan. A disulfide bridge connects residues cysteine 89 and cysteine 97. Residue asparagine 134 is glycosylated (N-linked (GlcNAc...) asparagine). Residues cysteine 202 and cysteine 223 are joined by a disulfide bond. The helical transmembrane segment at 234–254 threads the bilayer; that stretch reads VLALFAFVGFMLILVVVPLFV. Over 255–311 the chain is Cytoplasmic; it reads WKMGRLLQYSCCPVVVLPDTLKITNSPQKLISCRREEVDACATAVMSPEELLRAWIS.

The protein belongs to the type II cytokine receptor family. As to quaternary structure, heterodimer with IL20RA and heterodimer with IL22RA1. In terms of tissue distribution, widely expressed with highest levels in skin and testis. Highly expressed in psoriatic skin.

Its subcellular location is the membrane. Its function is as follows. The IL20RA/IL20RB dimer is a receptor for IL19, IL20 and IL24. The IL22RA1/IL20RB dimer is a receptor for IL20 and IL24. In Homo sapiens (Human), this protein is Interleukin-20 receptor subunit beta (IL20RB).